Reading from the N-terminus, the 574-residue chain is Proline--tRNA ligase (574 aa).

Belongs to the class-II aminoacyl-tRNA synthetase family. ProS type 1 subfamily. As to quaternary structure, homodimer.

It is found in the cytoplasm. The enzyme catalyses tRNA(Pro) + L-proline + ATP = L-prolyl-tRNA(Pro) + AMP + diphosphate. Its function is as follows. Catalyzes the attachment of proline to tRNA(Pro) in a two-step reaction: proline is first activated by ATP to form Pro-AMP and then transferred to the acceptor end of tRNA(Pro). As ProRS can inadvertently accommodate and process non-cognate amino acids such as alanine and cysteine, to avoid such errors it has two additional distinct editing activities against alanine. One activity is designated as 'pretransfer' editing and involves the tRNA(Pro)-independent hydrolysis of activated Ala-AMP. The other activity is designated 'posttransfer' editing and involves deacylation of mischarged Ala-tRNA(Pro). The misacylated Cys-tRNA(Pro) is not edited by ProRS. The protein is Proline--tRNA ligase of Hahella chejuensis (strain KCTC 2396).